Here is a 126-residue protein sequence, read N- to C-terminus: Small ribosomal subunit protein eS6 (126 aa).

It belongs to the eukaryotic ribosomal protein eS6 family.

The chain is Small ribosomal subunit protein eS6 from Thermococcus sibiricus (strain DSM 12597 / MM 739).